Here is a 689-residue protein sequence, read N- to C-terminus: Glycine--tRNA ligase beta subunit (689 aa).

The protein belongs to the class-II aminoacyl-tRNA synthetase family. Tetramer of two alpha and two beta subunits.

It localises to the cytoplasm. It carries out the reaction tRNA(Gly) + glycine + ATP = glycyl-tRNA(Gly) + AMP + diphosphate. In Yersinia pseudotuberculosis serotype O:1b (strain IP 31758), this protein is Glycine--tRNA ligase beta subunit.